Consider the following 483-residue polypeptide: Pentatricopeptide repeat-containing protein At5g18950 (483 aa).

PPR repeat units lie at residues 144-178 (EPTLLEQYVKCLSEEGLVEEAIEVYNVLKDMGISS), 179-213 (SVVTCNSVLLGCLKARKLDRFWELHKEMVESEFDS), 218-246 (CLIRALCDGGDVSEGYELLKQGLKQGLDP), 247-281 (GQYVYAKLISGFCEIGNYACMSEVLHTMIAWNHFP), 282-316 (SMYIYQKIIKGLCMNKKQLEAYCIFKNLKDKGYAP), 317-351 (DRVVYTTMIRGFCEKGWLGSARKLWFEMIKKGMRP), 352-386 (NEFAYNVMIHGHFKRGEISLVEAFYNEMLRNGYGG), 387-421 (TMLSCNTMIKGFCSHGKSDEAFEIFKNMSETGVTP), and 422-456 (NAITYNALIKGFCKENKVEKGLKLYKELKALGLKP).

Belongs to the PPR family. P subfamily.

This chain is Pentatricopeptide repeat-containing protein At5g18950, found in Arabidopsis thaliana (Mouse-ear cress).